We begin with the raw amino-acid sequence, 395 residues long: Thyroid hormone receptor beta (395 aa).

Residues 1–31 (MSEQADKCNSRWKDEAMQNGYIPSYLDKDEL) form a modulating region. The nuclear receptor DNA-binding region spans 29–106 (DELCVVCGDK…VGMATDLVLD (78 aa)). Zn(2+) contacts are provided by Cys-32, Cys-35, Cys-49, Cys-52, Cys-70, Cys-76, Cys-86, and Cys-89. 2 NR C4-type zinc fingers span residues 32–52 (CVVC…CEGC) and 70–89 (CKYE…CQEC). The NR LBD domain occupies 142–395 (EEWEMIRVVT…PPLFLEVFED (254 aa)). 3,3',5-triiodo-L-thyronine is bound by residues Arg-216, Asn-265, and His-369.

Belongs to the nuclear hormone receptor family. NR1 subfamily. In terms of assembly, interacts (via the ligand-binding domain) with ncoa2. Widely expressed in a range of adult tissues including the brain, eye, fin, gill, intestine, liver, swim bladder and ovary. In the eye, expressed in the outer nuclear layer of the retina.

Its subcellular location is the nucleus. Functionally, nuclear hormone receptor that can act as a repressor or activator of transcription. High affinity receptor for the thyroid gland hormone triiodothyronine (T3). Transactivating activity is ligand-dependent, and is repressed in the absence of T3. The chain is Thyroid hormone receptor beta (thrb) from Danio rerio (Zebrafish).